A 448-amino-acid polypeptide reads, in one-letter code: Chromosomal replication initiator protein DnaA (448 aa).

The domain I, interacts with DnaA modulators stretch occupies residues 1-85 (MHDNLPQIWE…EVHIVVPSEE (85 aa)). The tract at residues 85-110 (ERVGDTQNINARRSNAQSPIMGNSPL) is domain II. The segment at 111-327 (ILNPKYTFDT…GALIRIVAYS (217 aa)) is domain III, AAA+ region. 4 residues coordinate ATP: Gly155, Gly157, Lys158, and Thr159. The domain IV, binds dsDNA stretch occupies residues 328–448 (SLTNSEVTVE…DAIIKELKSD (121 aa)).

The protein belongs to the DnaA family. Oligomerizes as a right-handed, spiral filament on DNA at oriC.

It localises to the cytoplasm. Functionally, plays an essential role in the initiation and regulation of chromosomal replication. ATP-DnaA binds to the origin of replication (oriC) to initiate formation of the DNA replication initiation complex once per cell cycle. Binds the DnaA box (a 9 base pair repeat at the origin) and separates the double-stranded (ds)DNA. Forms a right-handed helical filament on oriC DNA; dsDNA binds to the exterior of the filament while single-stranded (ss)DNA is stabiized in the filament's interior. The ATP-DnaA-oriC complex binds and stabilizes one strand of the AT-rich DNA unwinding element (DUE), permitting loading of DNA polymerase. After initiation quickly degrades to an ADP-DnaA complex that is not apt for DNA replication. Binds acidic phospholipids. The protein is Chromosomal replication initiator protein DnaA of Alkaliphilus metalliredigens (strain QYMF).